The sequence spans 378 residues: UDP-N-acetylglucosamine--N-acetylmuramyl-(pentapeptide) pyrophosphoryl-undecaprenol N-acetylglucosamine transferase (378 aa).

UDP-N-acetyl-alpha-D-glucosamine-binding positions include 13-15, N124, R165, S193, and Q294; that span reads TGG.

This sequence belongs to the glycosyltransferase 28 family. MurG subfamily.

It is found in the cell inner membrane. The enzyme catalyses di-trans,octa-cis-undecaprenyl diphospho-N-acetyl-alpha-D-muramoyl-L-alanyl-D-glutamyl-meso-2,6-diaminopimeloyl-D-alanyl-D-alanine + UDP-N-acetyl-alpha-D-glucosamine = di-trans,octa-cis-undecaprenyl diphospho-[N-acetyl-alpha-D-glucosaminyl-(1-&gt;4)]-N-acetyl-alpha-D-muramoyl-L-alanyl-D-glutamyl-meso-2,6-diaminopimeloyl-D-alanyl-D-alanine + UDP + H(+). It functions in the pathway cell wall biogenesis; peptidoglycan biosynthesis. Its function is as follows. Cell wall formation. Catalyzes the transfer of a GlcNAc subunit on undecaprenyl-pyrophosphoryl-MurNAc-pentapeptide (lipid intermediate I) to form undecaprenyl-pyrophosphoryl-MurNAc-(pentapeptide)GlcNAc (lipid intermediate II). This Agrobacterium fabrum (strain C58 / ATCC 33970) (Agrobacterium tumefaciens (strain C58)) protein is UDP-N-acetylglucosamine--N-acetylmuramyl-(pentapeptide) pyrophosphoryl-undecaprenol N-acetylglucosamine transferase.